Reading from the N-terminus, the 618-residue chain is MQFDDFANHVITIEAESADLEITSLVSKLLTTAGNMDDKTLSTVVRFIKGTVFPAWSSQTLDIGPALLHTTIAQAAGPNVDSADVENRLAEYGEIGAVAASYDLNGQQGLSAFTPSTPDSLTVGHVDKTLRAVASASGDGSESRRRNLLFGLFSQASSSEARVLARLILGEMRIGVGTGTVRDAIISGFIEPAADADKKTLESREDAKSVPPASQPEITNKISGDTSPNTSESVQTKKSDPDTSSNVDPSAVVERALQVSNDYGMVATIARNQGQAGLIDISLELGRPIQAMLAQAADGVDAVDTWDAVAIETKFDGARVQIHTDGESVSLYSRNMEDVTDPLPEIVEFISQKVTVPAILDAEVVAVSDDGDPLAFQEVLRRFRRKYDIDAMRESVNLNVYVFDCLHIDDADLLDIPLRERREKLRELFNTTDALSPFQLTTDPNVIAQARSKALSNGHEGVMLKDPDSTYNPGSRGQHWLKHKPDVETLDLVVTGAEWGEGRRANVFGTFVVSARTTADEQQFNSLGKVATGLTDDQLTTLTEQLRPHVRSEDGQTVMIEPAIVVEVGYEEIQRSPTYDSGFALRFPRVVGIRHDKAISDVDSLSRIKHLTTGESPD.

Over residues 197 to 208 the composition is skewed to basic and acidic residues; sequence DKKTLESREDAK. Positions 197–250 are disordered; that stretch reads DKKTLESREDAKSVPPASQPEITNKISGDTSPNTSESVQTKKSDPDTSSNVDPS. Residues 216 to 234 show a composition bias toward polar residues; that stretch reads PEITNKISGDTSPNTSESV. ATP is bound at residue Glu-312. Residue Lys-314 is the N6-AMP-lysine intermediate of the active site. 6 residues coordinate ATP: Arg-319, Arg-334, Glu-363, Phe-403, Arg-476, and Lys-482. The interval 459–480 is disordered; sequence HEGVMLKDPDSTYNPGSRGQHW.

The protein belongs to the ATP-dependent DNA ligase family. It depends on Mg(2+) as a cofactor.

The enzyme catalyses ATP + (deoxyribonucleotide)n-3'-hydroxyl + 5'-phospho-(deoxyribonucleotide)m = (deoxyribonucleotide)n+m + AMP + diphosphate.. Functionally, DNA ligase that seals nicks in double-stranded DNA during DNA replication, DNA recombination and DNA repair. This Haloquadratum walsbyi (strain DSM 16790 / HBSQ001) protein is DNA ligase 2.